The following is a 374-amino-acid chain: Alpha-N-acetylgalactosaminide alpha-2,6-sialyltransferase 2 (374 aa).

The Cytoplasmic segment spans residues Met1–Ser7. Residues Phe8–Phe28 traverse the membrane as a helical; Signal-anchor for type II membrane protein segment. Residues Ser29–Arg374 lie on the Lumenal side of the membrane. 2 cysteine pairs are disulfide-bonded: Cys66/Cys148 and Cys151/Cys317. Residues Asn85 and Asn130 are each glycosylated (N-linked (GlcNAc...) asparagine). Asn156 serves as a coordination point for CMP-N-acetyl-beta-neuraminate. A glycan (N-linked (GlcNAc...) asparagine) is linked at Asn161. CMP-N-acetyl-beta-neuraminate-binding residues include Asn179, Ser304, and His336.

Belongs to the glycosyltransferase 29 family. Expressed in skeletal muscle, heart, kidney, placenta, lung and leukocytes.

It localises to the golgi apparatus membrane. It carries out the reaction a beta-D-galactosyl-(1-&gt;3)-N-acetyl-alpha-D-galactosaminyl derivative + CMP-N-acetyl-beta-neuraminate = a beta-D-galactosyl-(1-&gt;3)-[N-acetyl-alpha-neuraminyl-(2-&gt;6)]-N-acetyl-alpha-D-galactosaminyl derivative + CMP + H(+). The catalysed reaction is a 3-O-[N-acetyl-alpha-D-galactosaminyl]-L-threonyl-[protein] + CMP-N-acetyl-beta-neuraminate = a 3-O-[N-acetyl-alpha-neuraminosyl-(2-&gt;6)-N-acetyl-alpha-D-galactosaminyl]-L-threonyl-[protein] + CMP + H(+). It catalyses the reaction a 3-O-[N-acetyl-alpha-neuraminyl-(2-&gt;3)-beta-D-galactosyl-(1-&gt;3)-N-acetyl-alpha-D-galactosaminyl]-L-threonyl-[protein] + CMP-N-acetyl-beta-neuraminate = a 3-O-{alpha-Neu5Ac-(2-&gt;3)-beta-D-Gal-(1-&gt;3)-[alpha-Neu5Ac-(2-&gt;6)]-alpha-D-GalNAc}-L-threonyl-[protein] + CMP + H(+). Its pathway is protein modification; protein glycosylation. Functionally, catalyzes the transfer of N-acetylneuraminyl groups onto glycan chains in glycoproteins. Conjugates sialic acid with an alpha-2-6 linkage to N-acetylgalactosamine (GalNAc) glycan chains linked to serine or threonine in glycoproteins. Sialylates alphaGalNAc- and Galbeta1-&gt;3GalNAc-O-Ser/Thr epitopes also known as Tn and T antigens. The protein is Alpha-N-acetylgalactosaminide alpha-2,6-sialyltransferase 2 (ST6GALNAC2) of Homo sapiens (Human).